The primary structure comprises 262 residues: tRNA pseudouridine synthase A (262 aa).

Catalysis depends on Asp-51, which acts as the Nucleophile. Tyr-109 is a binding site for substrate.

Belongs to the tRNA pseudouridine synthase TruA family. Homodimer.

It carries out the reaction uridine(38/39/40) in tRNA = pseudouridine(38/39/40) in tRNA. Functionally, formation of pseudouridine at positions 38, 39 and 40 in the anticodon stem and loop of transfer RNAs. In Actinobacillus pleuropneumoniae serotype 5b (strain L20), this protein is tRNA pseudouridine synthase A.